The following is a 162-amino-acid chain: Onchocystatin (162 aa).

A signal peptide spans 1-32 (MLTIKDGTLLIHLLLFSVVALVQLQGAKSARA). The segment at 30–54 (ARAKNPSKMESKTGENQDRPVLLGG) is disordered. Basic and acidic residues predominate over residues 36-47 (SKMESKTGENQD). The Secondary area of contact signature appears at 97-101 (QVVAG). Cys-115 and Cys-128 are oxidised to a cystine.

This sequence belongs to the cystatin family. As to expression, expressed in the cuticle of L3 and L4 larvae, female adult, and in the eggshell of developing microfilariae.

In terms of biological role, cysteine protease inhibitor which inhibits members of the peptidase C1 family. In the human host, inhibits CTSL/cathepsin L and CTSS/cathepsin S and to a lesser extent CTSB/cathepsin B which may cause defects in antigen processing and thereby impair antigen-driven T cell proliferation. The sequence is that of Onchocystatin from Onchocerca volvulus.